A 232-amino-acid polypeptide reads, in one-letter code: Biosynthetic peptidoglycan transglycosylase (232 aa).

Residues 12–31 traverse the membrane as a helical segment; it reads YLLWFMAASVVLVAVLRWVP.

It belongs to the glycosyltransferase 51 family.

It localises to the cell inner membrane. It carries out the reaction [GlcNAc-(1-&gt;4)-Mur2Ac(oyl-L-Ala-gamma-D-Glu-L-Lys-D-Ala-D-Ala)](n)-di-trans,octa-cis-undecaprenyl diphosphate + beta-D-GlcNAc-(1-&gt;4)-Mur2Ac(oyl-L-Ala-gamma-D-Glu-L-Lys-D-Ala-D-Ala)-di-trans,octa-cis-undecaprenyl diphosphate = [GlcNAc-(1-&gt;4)-Mur2Ac(oyl-L-Ala-gamma-D-Glu-L-Lys-D-Ala-D-Ala)](n+1)-di-trans,octa-cis-undecaprenyl diphosphate + di-trans,octa-cis-undecaprenyl diphosphate + H(+). It functions in the pathway cell wall biogenesis; peptidoglycan biosynthesis. Functionally, peptidoglycan polymerase that catalyzes glycan chain elongation from lipid-linked precursors. The polypeptide is Biosynthetic peptidoglycan transglycosylase (Pseudomonas aeruginosa (strain ATCC 15692 / DSM 22644 / CIP 104116 / JCM 14847 / LMG 12228 / 1C / PRS 101 / PAO1)).